The following is a 157-amino-acid chain: Large ribosomal subunit protein eL24 (157 aa).

The disordered stretch occupies residues 94 to 157 (RNQKPEVRKA…ISAPRVGGKR (64 aa)). The segment covering 96–117 (QKPEVRKAQREQAIRAAKEAKK) has biased composition (basic and acidic residues). A compositionally biased stretch (low complexity) spans 123 to 140 (KKPAAPSAKASTKTAQKP).

It belongs to the eukaryotic ribosomal protein eL24 family. In terms of assembly, component of the large ribosomal subunit.

The protein localises to the cytoplasm. Functionally, component of the large ribosomal subunit. The ribosome is a large ribonucleoprotein complex responsible for the synthesis of proteins in the cell. This chain is Large ribosomal subunit protein eL24 (rpl24), found in Pagrus major (Red sea bream).